Here is a 172-residue protein sequence, read N- to C-terminus: Cell division protein SepF (172 aa).

Residues arginine 18 to leucine 73 form a disordered region. The segment covering glutamate 22–tyrosine 40 has biased composition (acidic residues). Over residues glutamine 48–alanine 59 the composition is skewed to basic and acidic residues. The span at arginine 60–arginine 70 shows a compositional bias: basic residues.

This sequence belongs to the SepF family. As to quaternary structure, homodimer. Interacts with FtsZ.

It is found in the cytoplasm. In terms of biological role, cell division protein that is part of the divisome complex and is recruited early to the Z-ring. Probably stimulates Z-ring formation, perhaps through the cross-linking of FtsZ protofilaments. Its function overlaps with FtsA. The chain is Cell division protein SepF from Cutibacterium acnes (strain DSM 16379 / KPA171202) (Propionibacterium acnes).